The chain runs to 250 residues: Adapter protein MecA (250 aa).

This sequence belongs to the MecA family. Homodimer.

Its function is as follows. Enables the recognition and targeting of unfolded and aggregated proteins to the ClpC protease or to other proteins involved in proteolysis. In Streptococcus sanguinis (strain SK36), this protein is Adapter protein MecA.